We begin with the raw amino-acid sequence, 94 residues long: MNTKFTVLIFLGVIVVSYGWITEKKIQKVLDEKLPNGFIKGAAKAVVHKLAKSEYGCMMDISWNKDCQRHCQSTEQKDGICHGMKCKCGKPRSY.

The signal sequence occupies residues 1-18 (MNTKFTVLIFLGVIVVSY). In terms of domain architecture, BetaSPN-type CS-alpha/beta spans 54–94 (EYGCMMDISWNKDCQRHCQSTEQKDGICHGMKCKCGKPRSY). Intrachain disulfides connect Cys-57/Cys-81, Cys-67/Cys-86, and Cys-71/Cys-88.

The protein belongs to the long chain scorpion toxin family. Class 3 subfamily. As to expression, expressed by the venom gland.

It is found in the secreted. In terms of biological role, has antibacterial activity. In Urodacus yaschenkoi (Inland robust scorpion), this protein is Scorpine-like-1.